The chain runs to 455 residues: Kynurenine 3-monooxygenase (455 aa).

Belongs to the aromatic-ring hydroxylase family. KMO subfamily. The cofactor is FAD.

It carries out the reaction L-kynurenine + NADPH + O2 + H(+) = 3-hydroxy-L-kynurenine + NADP(+) + H2O. It participates in cofactor biosynthesis; NAD(+) biosynthesis; quinolinate from L-kynurenine: step 1/3. In terms of biological role, catalyzes the hydroxylation of L-kynurenine (L-Kyn) to form 3-hydroxy-L-kynurenine (L-3OHKyn). Required for synthesis of quinolinic acid. This chain is Kynurenine 3-monooxygenase, found in Xanthomonas axonopodis pv. citri (strain 306).